Here is an 89-residue protein sequence, read N- to C-terminus: UPF0147 protein Msed_2034 (89 aa).

This sequence belongs to the UPF0147 family.

The protein is UPF0147 protein Msed_2034 of Metallosphaera sedula (strain ATCC 51363 / DSM 5348 / JCM 9185 / NBRC 15509 / TH2).